Consider the following 250-residue polypeptide: Probable transcriptional regulatory protein RHA1_ro06891 (250 aa).

The protein belongs to the TACO1 family.

The protein resides in the cytoplasm. In Rhodococcus jostii (strain RHA1), this protein is Probable transcriptional regulatory protein RHA1_ro06891.